A 38-amino-acid polypeptide reads, in one-letter code: Potassium channel toxin alpha-KTx 3.11 (38 aa).

Intrachain disulfides connect Cys8–Cys28, Cys14–Cys33, and Cys18–Cys35.

It belongs to the short scorpion toxin superfamily. Potassium channel inhibitor family. Alpha-KTx 03 subfamily. In terms of tissue distribution, expressed by the venom gland.

It localises to the secreted. In terms of biological role, blocks the voltage-gated potassium channel Kv1.3/KCNA3 (IC(50)=7.2 nM). Correnti and colleagues have also shown that this toxin inhibits Kv1.1/KCNA1, which is different from Abdel-Mottaleb and colleagues conclusions. The sequence is that of Potassium channel toxin alpha-KTx 3.11 from Odontobuthus doriae (Yellow Iranian scorpion).